Reading from the N-terminus, the 316-residue chain is 4-hydroxy-3-methylbut-2-enyl diphosphate reductase (316 aa).

Cys12 is a binding site for [4Fe-4S] cluster. Positions 41 and 74 each coordinate (2E)-4-hydroxy-3-methylbut-2-enyl diphosphate. His41 and His74 together coordinate dimethylallyl diphosphate. Isopentenyl diphosphate-binding residues include His41 and His74. [4Fe-4S] cluster is bound at residue Cys96. Position 124 (His124) interacts with (2E)-4-hydroxy-3-methylbut-2-enyl diphosphate. His124 is a dimethylallyl diphosphate binding site. His124 lines the isopentenyl diphosphate pocket. Glu126 (proton donor) is an active-site residue. Thr167 lines the (2E)-4-hydroxy-3-methylbut-2-enyl diphosphate pocket. Cys197 contributes to the [4Fe-4S] cluster binding site. (2E)-4-hydroxy-3-methylbut-2-enyl diphosphate is bound by residues Ser225, Ser226, Asn227, and Ser269. Residues Ser225, Ser226, Asn227, and Ser269 each coordinate dimethylallyl diphosphate. Isopentenyl diphosphate is bound by residues Ser225, Ser226, Asn227, and Ser269.

This sequence belongs to the IspH family. In terms of assembly, homodimer. The cofactor is [4Fe-4S] cluster.

The enzyme catalyses isopentenyl diphosphate + 2 oxidized [2Fe-2S]-[ferredoxin] + H2O = (2E)-4-hydroxy-3-methylbut-2-enyl diphosphate + 2 reduced [2Fe-2S]-[ferredoxin] + 2 H(+). The catalysed reaction is dimethylallyl diphosphate + 2 oxidized [2Fe-2S]-[ferredoxin] + H2O = (2E)-4-hydroxy-3-methylbut-2-enyl diphosphate + 2 reduced [2Fe-2S]-[ferredoxin] + 2 H(+). The protein operates within isoprenoid biosynthesis; dimethylallyl diphosphate biosynthesis; dimethylallyl diphosphate from (2E)-4-hydroxy-3-methylbutenyl diphosphate: step 1/1. It functions in the pathway isoprenoid biosynthesis; isopentenyl diphosphate biosynthesis via DXP pathway; isopentenyl diphosphate from 1-deoxy-D-xylulose 5-phosphate: step 6/6. Catalyzes the conversion of 1-hydroxy-2-methyl-2-(E)-butenyl 4-diphosphate (HMBPP) into a mixture of isopentenyl diphosphate (IPP) and dimethylallyl diphosphate (DMAPP). Acts in the terminal step of the DOXP/MEP pathway for isoprenoid precursor biosynthesis. This Salmonella paratyphi C (strain RKS4594) protein is 4-hydroxy-3-methylbut-2-enyl diphosphate reductase.